We begin with the raw amino-acid sequence, 42 residues long: Gastric inhibitory polypeptide (42 aa).

Belongs to the glucagon family.

Its subcellular location is the secreted. Potent stimulator of insulin secretion and relatively poor inhibitor of gastric acid secretion. This Bos taurus (Bovine) protein is Gastric inhibitory polypeptide (GIP).